A 220-amino-acid chain; its full sequence is MKTVLITAFEPFDGEAINPSWESVRQLQNQQLSGAHIETRQLPCVFNTSLTCLYAAIDEIQPELVIAVGQAGGRPDITVERIAININDARIPDNQGNQPIDTPIVATGPAAYFSTLPIKAIVSGLQTAGVPASISQSAGTYICNHVMYGLLHHLALTYPKVRGGLVRGGFIHIPYLPEQAVKHPGTPSMALETITMALKIAINQALENSGDIAISGGMTH.

Residues Glu-80, Cys-143, and His-172 contribute to the active site.

The protein belongs to the peptidase C15 family. As to quaternary structure, homotetramer.

Its subcellular location is the cytoplasm. The catalysed reaction is Release of an N-terminal pyroglutamyl group from a polypeptide, the second amino acid generally not being Pro.. Removes 5-oxoproline from various penultimate amino acid residues except L-proline. The sequence is that of Pyrrolidone-carboxylate peptidase 1 from Photorhabdus laumondii subsp. laumondii (strain DSM 15139 / CIP 105565 / TT01) (Photorhabdus luminescens subsp. laumondii).